The sequence spans 741 residues: Homeobox protein AHox1 (741 aa).

7 disordered regions span residues Met-1 to Ser-30, Lys-61 to Arg-96, Val-146 to Cys-183, Ala-203 to Asp-226, Lys-357 to Thr-383, Phe-476 to Thr-501, and Gln-616 to Lys-642. Positions Lys-7–Asn-19 are enriched in low complexity. Over residues Arg-63–Arg-78 the composition is skewed to basic and acidic residues. Positions Tyr-79–Glu-92 are enriched in polar residues. The span at Ser-169–Ser-181 shows a compositional bias: low complexity. Polar residues predominate over residues Arg-363–Ala-375. A compositionally biased stretch (polar residues) spans Gln-616 to Glu-629. The segment covering Thr-630–Gly-639 has biased composition (basic and acidic residues). A DNA-binding region (homeobox) is located at residues Arg-645–Ile-704. The segment at Glu-722–Asp-741 is disordered.

This sequence belongs to the H2.0 homeobox family. As to expression, expressed in the tissues of endodermal origin.

The protein localises to the nucleus. In Halocynthia roretzi (Sea squirt), this protein is Homeobox protein AHox1 (AHOX1).